The following is a 66-amino-acid chain: Beta-mammal toxin Co2 (66 aa).

In terms of domain architecture, LCN-type CS-alpha/beta spans 1–66 (KEGYIVNYHD…VWPLPKKRCN (66 aa)). 4 cysteine pairs are disulfide-bonded: cysteine 12–cysteine 65, cysteine 16–cysteine 41, cysteine 25–cysteine 46, and cysteine 29–cysteine 48.

Expressed by the venom gland.

Its subcellular location is the secreted. Functionally, beta toxins bind voltage-independently at site-4 of sodium channels (Nav) and shift the voltage of activation toward more negative potentials thereby affecting sodium channel activation and promoting spontaneous and repetitive firing. This toxin acts on human Nav1.1/SCN1A, Nav1.2/SCN2A, Nav1.4/SCN4A and Nav1.6/SCN8A voltage-gated sodium channels. Also, it reduces the peak of sodium currents in Nav1.5/SCN5A at all potentials. In vivo, is lethal to mice when intraperitoneally injected at a dose of 5ug. No activity is observed when injected into crickets or woodlice. This chain is Beta-mammal toxin Co2, found in Centruroides ornatus (Scorpion).